Consider the following 190-residue polypeptide: Holliday junction branch migration complex subunit RuvA (190 aa).

The segment at 1 to 63 (MIRKINATIE…EWNTSLYIFK (63 aa)) is domain I. The tract at residues 64–138 (DKIERDVFES…NSFSAYSTGA (75 aa)) is domain II. A flexible linker region spans residues 138 to 142 (ADTQS). Positions 143 to 190 (YGNNNLKEAIEALETLGFQRYEIMKVIGQLDLEDLKTEEIIKECLTRL) are domain III.

It belongs to the RuvA family. In terms of assembly, homotetramer. Forms an RuvA(8)-RuvB(12)-Holliday junction (HJ) complex. HJ DNA is sandwiched between 2 RuvA tetramers; dsDNA enters through RuvA and exits via RuvB. An RuvB hexamer assembles on each DNA strand where it exits the tetramer. Each RuvB hexamer is contacted by two RuvA subunits (via domain III) on 2 adjacent RuvB subunits; this complex drives branch migration. In the full resolvosome a probable DNA-RuvA(4)-RuvB(12)-RuvC(2) complex forms which resolves the HJ.

Its subcellular location is the cytoplasm. The RuvA-RuvB-RuvC complex processes Holliday junction (HJ) DNA during genetic recombination and DNA repair, while the RuvA-RuvB complex plays an important role in the rescue of blocked DNA replication forks via replication fork reversal (RFR). RuvA specifically binds to HJ cruciform DNA, conferring on it an open structure. The RuvB hexamer acts as an ATP-dependent pump, pulling dsDNA into and through the RuvAB complex. HJ branch migration allows RuvC to scan DNA until it finds its consensus sequence, where it cleaves and resolves the cruciform DNA. The polypeptide is Holliday junction branch migration complex subunit RuvA (Petrotoga mobilis (strain DSM 10674 / SJ95)).